Here is a 729-residue protein sequence, read N- to C-terminus: DNA gyrase subunit B, chloroplastic/mitochondrial (729 aa).

One can recognise a Toprim domain in the interval 510–617; it reads SEIFIVEGDS…RYQKALFDEG (108 aa). Residues Glu516, Asp590, and Asp592 each contribute to the Mg(2+) site.

It belongs to the type II topoisomerase GyrB family. Made up of two chains. The A chain is responsible for DNA breakage and rejoining; the B chain catalyzes ATP hydrolysis. The cofactor is Mg(2+). Mn(2+) is required as a cofactor. Requires Ca(2+) as cofactor.

It localises to the plastid. The protein resides in the chloroplast. It is found in the mitochondrion. The catalysed reaction is ATP-dependent breakage, passage and rejoining of double-stranded DNA.. A type II topoisomerase that negatively supercoils closed circular double-stranded DNA in an ATP-dependent manner. This is DNA gyrase subunit B, chloroplastic/mitochondrial (GYRB) from Oryza sativa subsp. japonica (Rice).